The chain runs to 119 residues: Large ribosomal subunit protein bL20 (119 aa).

Belongs to the bacterial ribosomal protein bL20 family.

In terms of biological role, binds directly to 23S ribosomal RNA and is necessary for the in vitro assembly process of the 50S ribosomal subunit. It is not involved in the protein synthesizing functions of that subunit. The chain is Large ribosomal subunit protein bL20 from Acidovorax ebreus (strain TPSY) (Diaphorobacter sp. (strain TPSY)).